Reading from the N-terminus, the 362-residue chain is Replication-associated protein (362 aa).

Residues 8–116 (RINAKNYFLT…DGDTLEWGEF (109 aa)) enclose the CRESS-DNA virus Rep endonuclease domain. The short motif at 15 to 18 (FLTY) is the RCR-1 element. 3 residues coordinate a divalent metal cation: glutamate 49, histidine 57, and histidine 59. The RCR-2 signature appears at 57 to 59 (HLH). The active-site For DNA cleavage activity is tyrosine 103. Residues 103–106 (YLEK) carry the RCR-3 motif. Aspartate 107 serves as a coordination point for a divalent metal cation. The tract at residues 143 to 153 (KSEALNVLREL) is binding to RBR1. Positions 156–176 (KDYVLQFHNLNSNLDRIFTPP) are oligomerization. 221–228 (GESRTGKT) provides a ligand contact to ATP. The tract at residues 341–362 (YSGTYQGPTQNSEEEVHPEEEN) is disordered. Residues 352–362 (SEEEVHPEEEN) show a composition bias toward acidic residues.

It belongs to the geminiviridae Rep protein family. In terms of assembly, homooligomer. Interacts with the replication enhancer protein (REn). Interacts with host retinoblastoma-related protein 1 (RBR1), and may thereby induce the transcription of host replicative enzymes even if the cell is not dividing anymore. Interacts with host PCNA. Interacts with host SCE1 protein. Binds to host RAD54 protein to ensure geminiviral replication. Mg(2+) is required as a cofactor. Mn(2+) serves as cofactor.

The protein resides in the host nucleus. Functionally, essential for the replication of viral ssDNA. The closed circular ssDNA genome is first converted to a superhelical dsDNA. Rep binds a specific region at the genome origin of replication. It introduces an endonucleolytic nick within the conserved sequence 5'-TAATATTAC-3' in the intergenic region of the genome present in all geminiviruses, thereby initiating the rolling circle replication (RCR). Following cleavage, binds covalently to the 5'-phosphate of DNA as a tyrosyl ester. The cleavage gives rise to a free 3'-OH that serves as a primer for the cellular DNA polymerase. The polymerase synthesizes the (+) strand DNA by rolling circle mechanism. After one round of replication, a Rep-catalyzed nucleotidyl transfer reaction releases a circular single-stranded virus genome, thereby terminating the replication. Displays origin-specific DNA cleavage, nucleotidyl transferase, ATPase and helicase activities. The chain is Replication-associated protein from Cynanchum acutum (Little mallow).